The chain runs to 429 residues: 3-phosphoshikimate 1-carboxyvinyltransferase (429 aa).

Positions 23, 24, and 28 each coordinate 3-phosphoshikimate. Position 23 (Lys-23) interacts with phosphoenolpyruvate. Phosphoenolpyruvate contacts are provided by Gly-94 and Arg-126. Residues Ser-171, Ser-172, Gln-173, Ser-199, Asp-316, Asn-339, and Lys-343 each coordinate 3-phosphoshikimate. Position 173 (Gln-173) interacts with phosphoenolpyruvate. Asp-316 (proton acceptor) is an active-site residue. Positions 347, 389, and 414 each coordinate phosphoenolpyruvate.

Belongs to the EPSP synthase family. In terms of assembly, monomer.

The protein resides in the cytoplasm. The catalysed reaction is 3-phosphoshikimate + phosphoenolpyruvate = 5-O-(1-carboxyvinyl)-3-phosphoshikimate + phosphate. It functions in the pathway metabolic intermediate biosynthesis; chorismate biosynthesis; chorismate from D-erythrose 4-phosphate and phosphoenolpyruvate: step 6/7. In terms of biological role, catalyzes the transfer of the enolpyruvyl moiety of phosphoenolpyruvate (PEP) to the 5-hydroxyl of shikimate-3-phosphate (S3P) to produce enolpyruvyl shikimate-3-phosphate and inorganic phosphate. The sequence is that of 3-phosphoshikimate 1-carboxyvinyltransferase from Idiomarina loihiensis (strain ATCC BAA-735 / DSM 15497 / L2-TR).